The following is a 192-amino-acid chain: Peptidyl-tRNA hydrolase (192 aa).

Tyrosine 17 is a binding site for tRNA. Residue histidine 22 is the Proton acceptor of the active site. TRNA contacts are provided by phenylalanine 68, asparagine 70, and asparagine 116.

It belongs to the PTH family. As to quaternary structure, monomer.

It localises to the cytoplasm. The enzyme catalyses an N-acyl-L-alpha-aminoacyl-tRNA + H2O = an N-acyl-L-amino acid + a tRNA + H(+). Its function is as follows. Hydrolyzes ribosome-free peptidyl-tRNAs (with 1 or more amino acids incorporated), which drop off the ribosome during protein synthesis, or as a result of ribosome stalling. Catalyzes the release of premature peptidyl moieties from peptidyl-tRNA molecules trapped in stalled 50S ribosomal subunits, and thus maintains levels of free tRNAs and 50S ribosomes. This is Peptidyl-tRNA hydrolase from Hydrogenovibrio crunogenus (strain DSM 25203 / XCL-2) (Thiomicrospira crunogena).